The primary structure comprises 284 residues: Putative ABC transporter ATP-binding protein PH1815 (284 aa).

The region spanning 4 to 244 is the ABC transporter domain; it reads IEVEDVSFRY…VEFLRTIGVK (241 aa). 38 to 45 serves as a coordination point for ATP; it reads GPSGSGKS.

Belongs to the ABC transporter superfamily.

The protein localises to the cell membrane. Probably part of an ABC transporter complex. Responsible for energy coupling to the transport system. This is Putative ABC transporter ATP-binding protein PH1815 from Pyrococcus horikoshii (strain ATCC 700860 / DSM 12428 / JCM 9974 / NBRC 100139 / OT-3).